Reading from the N-terminus, the 388-residue chain is Diacylglycerol O-acyltransferase 2 (388 aa).

At 1–69 (MKTLIAAYSG…NRSKVEKQLQ (69 aa)) the chain is on the cytoplasmic side. The helical transmembrane segment at 70–88 (VISVLQWVLSFLVLGVACS) threads the bilayer. Over 89–92 (VILM) the chain is Lumenal. A helical membrane pass occupies residues 93–112 (YTFCTDCWLIAVLYFTWLAF). Topologically, residues 113-388 (DWNTPKKGGR…LPETEVLEVN (276 aa)) are cytoplasmic.

The protein belongs to the diacylglycerol acyltransferase family. In terms of assembly, forms multimeric complexes consisting of several DGAT2 subunits. Interacts with SLC27A1 and this interaction is enhanced in the presence of ZFYVE1. In terms of tissue distribution, predominantly expressed in liver. Also expressed in testis.

It localises to the endoplasmic reticulum membrane. The protein resides in the lipid droplet. The protein localises to the cytoplasm. It is found in the perinuclear region. The enzyme catalyses an acyl-CoA + a 1,2-diacyl-sn-glycerol = a triacyl-sn-glycerol + CoA. It catalyses the reaction all-trans-retinol + an acyl-CoA = an all-trans-retinyl ester + CoA. The catalysed reaction is 1,2-di-(9Z-octadecenoyl)-sn-glycerol + hexadecanoyl-CoA = 1,2-di-(9Z)-octadecenoyl-3-hexadecanoyl-sn-glycerol + CoA. It carries out the reaction 1,2-di-(9Z-octadecenoyl)-sn-glycerol + (9Z)-octadecenoyl-CoA = 1,2,3-tri-(9Z-octadecenoyl)-glycerol + CoA. The enzyme catalyses 1,3-di-(9Z-octadecenoyl)-glycerol + (9Z)-octadecenoyl-CoA = 1,2,3-tri-(9Z-octadecenoyl)-glycerol + CoA. It catalyses the reaction 2,3-di-(9Z)-octadecenoyl-sn-glycerol + (9Z)-octadecenoyl-CoA = 1,2,3-tri-(9Z-octadecenoyl)-glycerol + CoA. The catalysed reaction is 2-(9Z-octadecenoyl)-glycerol + hexadecanoyl-CoA = 1-hexadecanoyl-2-(9Z-octadecenoyl)-sn-glycerol + CoA. It carries out the reaction 2-(9Z-octadecenoyl)-glycerol + (9Z)-octadecenoyl-CoA = 1,2-di-(9Z-octadecenoyl)-sn-glycerol + CoA. The enzyme catalyses all-trans-retinol + hexadecanoyl-CoA = all-trans-retinyl hexadecanoate + CoA. It catalyses the reaction 1-O-(9Z-octadecenyl)-glycerol + (9Z)-octadecenoyl-CoA = 1-O-(9Z-octadecyl)-3-(9Z-octadecenoyl)-glycerol + CoA. The catalysed reaction is 1-(9Z-octadecenoyl)-glycerol + (9Z)-octadecenoyl-CoA = 1,2-di-(9Z-octadecenoyl)-glycerol + CoA. The protein operates within glycerolipid metabolism; triacylglycerol biosynthesis. Its activity is regulated as follows. Inhibited by niacin. Essential acyltransferase that catalyzes the terminal and only committed step in triacylglycerol synthesis by using diacylglycerol and fatty acyl CoA as substrates. Required for synthesis and storage of intracellular triglycerides. Probably plays a central role in cytosolic lipid accumulation. In liver, is primarily responsible for incorporating endogenously synthesized fatty acids into triglycerides. Also functions as an acyl-CoA retinol acyltransferase (ARAT). Also able to use 1-monoalkylglycerol (1-MAkG) as an acyl acceptor for the synthesis of monoalkyl-monoacylglycerol (MAMAG). In Mus musculus (Mouse), this protein is Diacylglycerol O-acyltransferase 2.